A 356-amino-acid polypeptide reads, in one-letter code: MSWQNNLHSVSPYIAGEQPELTDMIKLNTNENPYQPSLQVQKVIEDFKSENLRLYPSTDAKFLRKALAEYHHLNTDQVFIGNGSDEVLSLSFLTFFNGQRAILMPDISYSFYPIYCELYRIPYQKIPLADDFSLSVNSYFQENGGIVIANPNAPTGMAISLQEIEEILQNNQDSIVLIDEAYIDFGGESCLPLLEKFDNLVVVQTFSKSRSLAGIRLGIAFGSAEAIAHLYDVKNSFNSYPIDSLAQKIGEASFTDETYFQKSVSKIITTRENFKNELIKLGFQVTDSKTNFVFVHHPKIDATTLFKVLYEAKIIVRHWNQARISDWLRITIGTDREMNTVIQFLKEYLKNKEKSY.

At lysine 208 the chain carries N6-(pyridoxal phosphate)lysine.

This sequence belongs to the class-II pyridoxal-phosphate-dependent aminotransferase family. Histidinol-phosphate aminotransferase subfamily. As to quaternary structure, homodimer. It depends on pyridoxal 5'-phosphate as a cofactor.

It catalyses the reaction L-histidinol phosphate + 2-oxoglutarate = 3-(imidazol-4-yl)-2-oxopropyl phosphate + L-glutamate. Its pathway is amino-acid biosynthesis; L-histidine biosynthesis; L-histidine from 5-phospho-alpha-D-ribose 1-diphosphate: step 7/9. This is Histidinol-phosphate aminotransferase from Lactococcus lactis subsp. cremoris (strain SK11).